Consider the following 492-residue polypeptide: Peptidyl-prolyl cis-trans isomerase-like 4 (492 aa).

The region spanning 1–161 is the PPIase cyclophilin-type domain; it reads MAVLLETTLG…QDIRINHTVI (161 aa). The tract at residues 167-188 is disordered; sequence DDPPDLLIPDRSPEPTKEQLDS. Over residues 177-187 the composition is skewed to basic and acidic residues; it reads RSPEPTKEQLD. Residue serine 178 is modified to Phosphoserine. At threonine 182 the chain carries Phosphothreonine. Glycyl lysine isopeptide (Lys-Gly) (interchain with G-Cter in SUMO2) cross-links involve residues lysine 201, lysine 212, and lysine 218. An RRM domain is found at 240–318; sequence NVLFVCKLNP…RRIHVDFSQS (79 aa). Glycyl lysine isopeptide (Lys-Gly) (interchain with G-Cter in SUMO2) cross-links involve residues lysine 321 and lysine 362. Disordered regions lie at residues 368 to 409 and 423 to 492; these read DEQG…NPNQ and EESC…SKYR. Positions 377 to 390 are enriched in basic residues; sequence SHSHTSKKHKKKTR. Serine 393 carries the phosphoserine modification. Lysine 405 is covalently cross-linked (Glycyl lysine isopeptide (Lys-Gly) (interchain with G-Cter in SUMO2)). The segment covering 426 to 436 has biased composition (basic and acidic residues); sequence CWEKQKNEKRD. A Glycyl lysine isopeptide (Lys-Gly) (interchain with G-Cter in SUMO2) cross-link involves residue lysine 460. Serine 471 is subject to Phosphoserine. Over residues 473 to 485 the composition is skewed to basic residues; it reads KRDRSRSPKKSKA.

The protein belongs to the cyclophilin-type PPIase family. PPIL4 subfamily.

It is found in the nucleus. The enzyme catalyses [protein]-peptidylproline (omega=180) = [protein]-peptidylproline (omega=0). Functionally, PPIases accelerate the folding of proteins. It catalyzes the cis-trans isomerization of proline imidic peptide bonds in oligopeptides. The protein is Peptidyl-prolyl cis-trans isomerase-like 4 (Ppil4) of Mus musculus (Mouse).